The primary structure comprises 83 residues: Large ribosomal subunit protein uL23 (83 aa).

It belongs to the universal ribosomal protein uL23 family. As to quaternary structure, part of the 50S ribosomal subunit. Contacts protein L29.

Binds to 23S rRNA. One of the proteins that surrounds the polypeptide exit tunnel on the outside of the ribosome. The polypeptide is Large ribosomal subunit protein uL23 (Thermoplasma volcanium (strain ATCC 51530 / DSM 4299 / JCM 9571 / NBRC 15438 / GSS1)).